The primary structure comprises 226 residues: Ribonuclease 3 (226 aa).

An RNase III domain is found at 6 to 128; that stretch reads INRLQRKLGY…LIGGVFLDSD (123 aa). E41 contributes to the Mg(2+) binding site. Residue D45 is part of the active site. Residues D114 and E117 each contribute to the Mg(2+) site. The active site involves E117. The 71-residue stretch at 155–225 folds into the DRBM domain; the sequence is DPKTRLQEYL…AEQALKQLEL (71 aa).

Belongs to the ribonuclease III family. In terms of assembly, homodimer. Requires Mg(2+) as cofactor.

The protein localises to the cytoplasm. The catalysed reaction is Endonucleolytic cleavage to 5'-phosphomonoester.. Its function is as follows. Digests double-stranded RNA. Involved in the processing of primary rRNA transcript to yield the immediate precursors to the large and small rRNAs (23S and 16S). Processes some mRNAs, and tRNAs when they are encoded in the rRNA operon. Processes pre-crRNA and tracrRNA of type II CRISPR loci if present in the organism. The chain is Ribonuclease 3 from Yersinia pseudotuberculosis serotype O:1b (strain IP 31758).